A 79-amino-acid chain; its full sequence is Sulfur carrier protein TusA (79 aa).

The active-site Cysteine persulfide intermediate is Cys17.

It belongs to the sulfur carrier protein TusA family.

It is found in the cytoplasm. Functionally, sulfur carrier protein which probably makes part of a sulfur-relay system. In Histophilus somni (strain 129Pt) (Haemophilus somnus), this protein is Sulfur carrier protein TusA.